Reading from the N-terminus, the 38-residue chain is Large ribosomal subunit protein bL36 (38 aa).

Belongs to the bacterial ribosomal protein bL36 family.

This chain is Large ribosomal subunit protein bL36, found in Roseiflexus sp. (strain RS-1).